A 453-amino-acid chain; its full sequence is F-box protein At4g27050 (453 aa).

The F-box domain occupies 3–51; that stretch reads TDLISNLPDDVLGKILSLVPTKLAAATSVLSKRWRNLLPLVDSLDFDET.

As to quaternary structure, part of a SCF (ASK-cullin-F-box) protein ligase complex.

It participates in protein modification; protein ubiquitination. Its function is as follows. Component of SCF(ASK-cullin-F-box) E3 ubiquitin ligase complexes, which may mediate the ubiquitination and subsequent proteasomal degradation of target proteins. The chain is F-box protein At4g27050 from Arabidopsis thaliana (Mouse-ear cress).